Here is a 181-residue protein sequence, read N- to C-terminus: ATP-dependent protease subunit HslV (181 aa).

Thr7 is an active-site residue. Na(+) contacts are provided by Gly166, Cys169, and Thr172.

It belongs to the peptidase T1B family. HslV subfamily. In terms of assembly, a double ring-shaped homohexamer of HslV is capped on each side by a ring-shaped HslU homohexamer. The assembly of the HslU/HslV complex is dependent on binding of ATP.

Its subcellular location is the cytoplasm. It catalyses the reaction ATP-dependent cleavage of peptide bonds with broad specificity.. With respect to regulation, allosterically activated by HslU binding. In terms of biological role, protease subunit of a proteasome-like degradation complex believed to be a general protein degrading machinery. This chain is ATP-dependent protease subunit HslV, found in Variovorax paradoxus (strain S110).